The sequence spans 367 residues: Tetraacyldisaccharide 4'-kinase (367 aa).

68 to 75 contributes to the ATP binding site; it reads VLGGSGKT.

It belongs to the LpxK family.

The enzyme catalyses a lipid A disaccharide + ATP = a lipid IVA + ADP + H(+). It participates in glycolipid biosynthesis; lipid IV(A) biosynthesis; lipid IV(A) from (3R)-3-hydroxytetradecanoyl-[acyl-carrier-protein] and UDP-N-acetyl-alpha-D-glucosamine: step 6/6. In terms of biological role, transfers the gamma-phosphate of ATP to the 4'-position of a tetraacyldisaccharide 1-phosphate intermediate (termed DS-1-P) to form tetraacyldisaccharide 1,4'-bis-phosphate (lipid IVA). The protein is Tetraacyldisaccharide 4'-kinase of Chlamydia caviae (strain ATCC VR-813 / DSM 19441 / 03DC25 / GPIC) (Chlamydophila caviae).